A 166-amino-acid chain; its full sequence is Cytochrome c-type biogenesis protein CcmE (166 aa).

The Cytoplasmic portion of the chain corresponds to 1–8 (MNAVRRKK). A helical; Signal-anchor for type II membrane protein membrane pass occupies residues 9 to 29 (LMWVMFTLAGAVIAVALVIYA). The Periplasmic portion of the chain corresponds to 30-166 (IGKQTDYYFD…KLHETKTLQQ (137 aa)). Positions 124 and 128 each coordinate heme. A disordered region spans residues 133–166 (VAKSMKENNRSGAVPSSEQYNPAEKLHETKTLQQ). Residues 142–152 (RSGAVPSSEQY) show a composition bias toward polar residues. Positions 156 to 166 (EKLHETKTLQQ) are enriched in basic and acidic residues.

Belongs to the CcmE/CycJ family.

It is found in the cell inner membrane. In terms of biological role, heme chaperone required for the biogenesis of c-type cytochromes. Transiently binds heme delivered by CcmC and transfers the heme to apo-cytochromes in a process facilitated by CcmF and CcmH. This Psychrobacter arcticus (strain DSM 17307 / VKM B-2377 / 273-4) protein is Cytochrome c-type biogenesis protein CcmE.